We begin with the raw amino-acid sequence, 303 residues long: 2-dehydropantoate 2-reductase (303 aa).

NADP(+)-binding positions include 7-12, Asn-98, and Ala-122; that span reads GCGALG. Asn-98 is a substrate binding site. Lys-176 serves as the catalytic Proton donor. Residues Asn-180, Asn-184, Asn-194, and Ser-244 each contribute to the substrate site. Glu-256 contacts NADP(+).

This sequence belongs to the ketopantoate reductase family. In terms of assembly, monomer.

The protein localises to the cytoplasm. The catalysed reaction is (R)-pantoate + NADP(+) = 2-dehydropantoate + NADPH + H(+). It functions in the pathway cofactor biosynthesis; (R)-pantothenate biosynthesis; (R)-pantoate from 3-methyl-2-oxobutanoate: step 2/2. Catalyzes the NADPH-dependent reduction of ketopantoate into pantoic acid. This chain is 2-dehydropantoate 2-reductase (panE), found in Escherichia coli O157:H7.